A 715-amino-acid polypeptide reads, in one-letter code: Fatty acid oxidation complex subunit alpha (715 aa).

The segment at 1-190 is enoyl-CoA hydratase; that stretch reads MTTTSAFMLN…KAGLVDDVVP (190 aa). Residues 306-715 are 3-hydroxyacyl-CoA dehydrogenase; sequence GPLNSVGILG…WTNGETDQGN (410 aa).

It in the N-terminal section; belongs to the enoyl-CoA hydratase/isomerase family. In the central section; belongs to the 3-hydroxyacyl-CoA dehydrogenase family. Heterotetramer of two alpha chains (FadJ) and two beta chains (FadI).

It is found in the cytoplasm. It carries out the reaction a (3S)-3-hydroxyacyl-CoA = a (2E)-enoyl-CoA + H2O. The catalysed reaction is a 4-saturated-(3S)-3-hydroxyacyl-CoA = a (3E)-enoyl-CoA + H2O. It catalyses the reaction a (3S)-3-hydroxyacyl-CoA + NAD(+) = a 3-oxoacyl-CoA + NADH + H(+). The enzyme catalyses (3S)-3-hydroxybutanoyl-CoA = (3R)-3-hydroxybutanoyl-CoA. It functions in the pathway lipid metabolism; fatty acid beta-oxidation. Catalyzes the formation of a hydroxyacyl-CoA by addition of water on enoyl-CoA. Also exhibits 3-hydroxyacyl-CoA epimerase and 3-hydroxyacyl-CoA dehydrogenase activities. The chain is Fatty acid oxidation complex subunit alpha from Salmonella agona (strain SL483).